A 102-amino-acid chain; its full sequence is Small ribosomal subunit protein bS18c (102 aa).

The protein belongs to the bacterial ribosomal protein bS18 family. In terms of assembly, part of the 30S ribosomal subunit.

Its subcellular location is the plastid. It localises to the chloroplast. The chain is Small ribosomal subunit protein bS18c from Phaseolus vulgaris (Kidney bean).